The primary structure comprises 48 residues: uncharacterized protein (48 aa).

The interval 1-48 is disordered; sequence MTKIPINIPATSGKIKFGITPSSNKSPSLSPSPSNGQLGGGRGYILEP. Residues 21–36 show a composition bias toward low complexity; the sequence is PSSNKSPSLSPSPSNG. Residues 37-48 are compositionally biased toward gly residues; that stretch reads QLGGGRGYILEP.

This is an uncharacterized protein from Dictyostelium discoideum (Social amoeba).